Consider the following 517-residue polypeptide: Pentatricopeptide repeat-containing protein At1g13040, mitochondrial (517 aa).

The transit peptide at 1 to 57 (MHQTLGAVRLAYRSRIANLVKSGMIDNAVQVFDEMRHSSYRVFSFDYNRFIGVLVRE) directs the protein to the mitochondrion. PPR repeat units follow at residues 8-42 (VRLA…SYRV), 43-77 (FSFD…GFSL), 78-112 (IPFT…GFIP), 113-147 (DIWA…GREP), 148-182 (DVVS…GVSP), 183-218 (DNKA…RVKL), 219-253 (STVV…GCEP), 254-288 (DLVT…GIQL), 289-320 (DAYS…MEPR), 324-358 (DVVS…GMVM), 359-393 (NVVT…GLSP), 394-428 (DRIF…EITP), 429-463 (DAIS…ECCP), and 464-498 (DELT…GFTL).

It belongs to the PPR family. P subfamily.

The protein resides in the mitochondrion. The protein is Pentatricopeptide repeat-containing protein At1g13040, mitochondrial of Arabidopsis thaliana (Mouse-ear cress).